Here is a 361-residue protein sequence, read N- to C-terminus: Probable mannose-1-phosphate guanylyltransferase 3 (361 aa).

Residues leucine 6 and valine 7 each coordinate GDP-alpha-D-mannose. Diphosphate is bound by residues glycine 9, glycine 11, threonine 12, arginine 13, and lysine 23. GDP-alpha-D-mannose contacts are provided by glycine 85, asparagine 109, aspartate 111, glycine 146, and asparagine 173.

Belongs to the transferase hexapeptide repeat family.

It catalyses the reaction alpha-D-mannose 1-phosphate + GTP + H(+) = GDP-alpha-D-mannose + diphosphate. Its pathway is nucleotide-sugar biosynthesis; GDP-alpha-D-mannose biosynthesis; GDP-alpha-D-mannose from alpha-D-mannose 1-phosphate (GTP route): step 1/1. Its function is as follows. Catalyzes a reaction of the Smirnoff-Wheeler pathway, the major route to ascorbate biosynthesis in plants. In Oryza sativa subsp. japonica (Rice), this protein is Probable mannose-1-phosphate guanylyltransferase 3.